The chain runs to 28 residues: Dermaseptin-1 (28 aa).

The residue at position 28 (Gln-28) is a Glutamine amide.

Expressed by the skin glands.

It localises to the secreted. Functionally, has antimicrobial activity. The protein is Dermaseptin-1 of Phyllomedusa tomopterna (Tiger-striped leaf frog).